A 380-amino-acid polypeptide reads, in one-letter code: MLSDIPRDALLRPLTRNEVVGMLVRLTVFGAATYYSIKWVVDALDPTQKQKSQAKKRAEQLMKQIGVEGVSLTEYEMNIATLLVDPRSIKVTWRDVAGLDEIISEMQDTVILPFQKRHLFSGSKLLQPPKGVLLYGPPGCGKTLIAKATAKASGCRFINLQASTLTDKWYGESQKLTAAVFSLAVKIQPCIIFLDEIDSFLRNRSSMDHEATAMMKAQFMSLWDGLDTGENSQVMVMGATNRPQDVDAAILRRMPTAFHVGLPNAAQREEILRLILSGENLSNAINLKEIASQSEGYSGSDLKELCRDAAMYRVRDYVRKQQMKQIAQQFQLDEEEEHVDSRQLRPVTQLDLLFGLDKMRESKQATATTDPANLREVPLD.

At 1–18 (MLSDIPRDALLRPLTRNE) the chain is on the mitochondrial intermembrane side. Residues 19–37 (VVGMLVRLTVFGAATYYSI) traverse the membrane as a helical segment. At 38–380 (KWVVDALDPT…PANLREVPLD (343 aa)) the chain is on the cytoplasmic side. 136-143 (GPPGCGKT) serves as a coordination point for ATP.

The protein belongs to the AAA ATPase family. MSP1 subfamily.

The protein resides in the mitochondrion outer membrane. Its subcellular location is the peroxisome membrane. It localises to the postsynaptic cell membrane. The catalysed reaction is [protein]-with a C-terminal TM segment(out) + ATP + H2O = [protein]-with a C-terminal TM segment(in) + ADP + phosphate + H(+). In terms of biological role, outer mitochondrial translocase required to remove mislocalized tail-anchored transmembrane proteins on mitochondria. Specifically recognizes and binds tail-anchored transmembrane proteins: acts as a dislocase that mediates the ATP-dependent extraction of mistargeted tail-anchored transmembrane proteins from the mitochondrion outer membrane. Also plays a critical role in regulating the surface expression of AMPA receptors (AMPAR), thereby regulating synaptic plasticity and learning and memory. This Danio rerio (Zebrafish) protein is Outer mitochondrial transmembrane helix translocase.